A 503-amino-acid chain; its full sequence is Lanosterol 14-alpha demethylase (503 aa).

Residues 24–44 (GNLLSTLLIACAFTLSLVYLF) form a helical membrane-spanning segment. Cys-449 provides a ligand contact to heme.

Belongs to the cytochrome P450 family. It depends on heme as a cofactor. In terms of processing, ubiquitinated by MARCHF6, leading to proteasomal degradation.

The protein resides in the endoplasmic reticulum membrane. The protein localises to the microsome membrane. It carries out the reaction a 14alpha-methyl steroid + 3 reduced [NADPH--hemoprotein reductase] + 3 O2 = a Delta(14) steroid + formate + 3 oxidized [NADPH--hemoprotein reductase] + 4 H2O + 4 H(+). It catalyses the reaction lanosterol + 3 reduced [NADPH--hemoprotein reductase] + 3 O2 = 4,4-dimethyl-5alpha-cholesta-8,14,24-trien-3beta-ol + formate + 3 oxidized [NADPH--hemoprotein reductase] + 4 H2O + 4 H(+). The enzyme catalyses 24,25-dihydrolanosterol + 3 reduced [NADPH--hemoprotein reductase] + 3 O2 = 4,4-dimethyl-8,14-cholestadien-3beta-ol + formate + 3 oxidized [NADPH--hemoprotein reductase] + 4 H2O + 4 H(+). The catalysed reaction is a 14alpha-methyl steroid + reduced [NADPH--hemoprotein reductase] + O2 = a 14alpha-hydroxymethyl steroid + oxidized [NADPH--hemoprotein reductase] + H2O + H(+). It carries out the reaction a 14alpha-hydroxymethyl steroid + reduced [NADPH--hemoprotein reductase] + O2 = a 14alpha-formyl steroid + oxidized [NADPH--hemoprotein reductase] + 2 H2O + H(+). It catalyses the reaction a 14alpha-formyl steroid + reduced [NADPH--hemoprotein reductase] + O2 = a Delta(14) steroid + formate + oxidized [NADPH--hemoprotein reductase] + H2O + 2 H(+). The enzyme catalyses lanosterol + reduced [NADPH--hemoprotein reductase] + O2 = 32-hydroxylanosterol + oxidized [NADPH--hemoprotein reductase] + H2O + H(+). The catalysed reaction is 32-hydroxylanosterol + reduced [NADPH--hemoprotein reductase] + O2 = 32-oxolanosterol + oxidized [NADPH--hemoprotein reductase] + 2 H2O + H(+). It carries out the reaction 32-oxolanosterol + reduced [NADPH--hemoprotein reductase] + O2 = 4,4-dimethyl-5alpha-cholesta-8,14,24-trien-3beta-ol + formate + oxidized [NADPH--hemoprotein reductase] + H2O + 2 H(+). It catalyses the reaction 24,25-dihydrolanosterol + reduced [NADPH--hemoprotein reductase] + O2 = 32-hydroxy-24,25-dihydrolanosterol + oxidized [NADPH--hemoprotein reductase] + H2O + H(+). The enzyme catalyses 32-hydroxy-24,25-dihydrolanosterol + reduced [NADPH--hemoprotein reductase] + O2 = 32-oxo-24,25-dihydrolanosterol + oxidized [NADPH--hemoprotein reductase] + 2 H2O + H(+). The catalysed reaction is 32-oxo-24,25-dihydrolanosterol + reduced [NADPH--hemoprotein reductase] + O2 = 4,4-dimethyl-8,14-cholestadien-3beta-ol + formate + oxidized [NADPH--hemoprotein reductase] + H2O + 2 H(+). It functions in the pathway steroid biosynthesis; zymosterol biosynthesis; zymosterol from lanosterol: step 1/6. With respect to regulation, inhibited by azalanstat. Inhibited by azole antifungal agents ketoconazole, itraconazole and fluconazole. Its function is as follows. Sterol 14alpha-demethylase that plays a critical role in the cholesterol biosynthesis pathway, being cholesterol the major sterol component in mammalian membranes as well as a precursor for bile acid and steroid hormone synthesis. Cytochrome P450 monooxygenase that catalyzes the three-step oxidative removal of the 14alpha-methyl group (C-32) of sterols such as lanosterol (lanosta-8,24-dien-3beta-ol) and 24,25-dihydrolanosterol (DHL) in the form of formate, and converts the sterols to 4,4-dimethyl-5alpha-cholesta-8,14,24-trien-3beta-ol and 4,4-dimethyl-8,14-cholestadien-3beta-ol, respectively, which are intermediates of cholesterol biosynthesis. Can also demethylate substrates not intrinsic to mammals, such as eburicol (24-methylene-24,25-dihydrolanosterol), but at a lower rate than DHL. The polypeptide is Lanosterol 14-alpha demethylase (Mus musculus (Mouse)).